The primary structure comprises 218 residues: Envelope glycoprotein L (218 aa).

Residues 57–185 (KLVKATRLDF…LGPPPLGCFT (129 aa)) are interaction with gH. The gL alphaherpesvirus-type domain occupies 60-218 (KATRLDFTWG…ASYYANLQKT (159 aa)). Cystine bridges form between C81–C113 and C183–C206.

It belongs to the herpesviridae glycoprotein L (gL) family. Alphaherpesvirinae gL subfamily. In terms of assembly, interacts with glycoprotein H (gH); this interaction is necessary for the correct processing and cell surface expression of gH. The heterodimer gH/gL seems to interact with gB trimers during fusion.

It localises to the virion membrane. The protein localises to the host cell membrane. The protein resides in the host Golgi apparatus. It is found in the host trans-Golgi network. Functionally, the heterodimer glycoprotein H-glycoprotein L is required for the fusion of viral and plasma membranes leading to virus entry into the host cell. Acts as a functional inhibitor of gH and maintains gH in an inhibited form. Upon binding to host integrins, gL dissociates from gH leading to activation of the viral fusion glycoproteins gB and gH. This chain is Envelope glycoprotein L, found in Equus caballus (Horse).